The following is a 48-amino-acid chain: Large ribosomal subunit protein bL34 (48 aa).

It belongs to the bacterial ribosomal protein bL34 family.

The sequence is that of Large ribosomal subunit protein bL34 (rpmH) from Mycoplasma genitalium (strain ATCC 33530 / DSM 19775 / NCTC 10195 / G37) (Mycoplasmoides genitalium).